A 364-amino-acid polypeptide reads, in one-letter code: Tyrosine-protein phosphatase YVH1 (364 aa).

A Tyrosine-protein phosphatase domain is found at 11–173 (EVTRILGGIY…LHLFEKMGGD (163 aa)). Cysteine 117 functions as the Phosphocysteine intermediate in the catalytic mechanism. Serine 196 is modified (phosphoserine).

Belongs to the protein-tyrosine phosphatase family. Non-receptor class dual specificity subfamily.

The enzyme catalyses O-phospho-L-tyrosyl-[protein] + H2O = L-tyrosyl-[protein] + phosphate. In terms of biological role, may be directly involved in signal transduction and/or cell cycle regulation. It is necessary for maintaining growth rate or spore germination. Could show both activity toward tyrosine-protein phosphate as well as with serine-protein phosphate. This Saccharomyces cerevisiae (strain ATCC 204508 / S288c) (Baker's yeast) protein is Tyrosine-protein phosphatase YVH1 (YVH1).